A 374-amino-acid chain; its full sequence is DNA replication and repair protein RecF (374 aa).

34 to 41 (GDNGAGKT) serves as a coordination point for ATP.

Belongs to the RecF family.

The protein localises to the cytoplasm. In terms of biological role, the RecF protein is involved in DNA metabolism; it is required for DNA replication and normal SOS inducibility. RecF binds preferentially to single-stranded, linear DNA. It also seems to bind ATP. This is DNA replication and repair protein RecF from Rhizobium johnstonii (strain DSM 114642 / LMG 32736 / 3841) (Rhizobium leguminosarum bv. viciae).